Consider the following 416-residue polypeptide: Enolase (416 aa).

Q156 is a (2R)-2-phosphoglycerate binding site. The active-site Proton donor is the E200. Mg(2+) is bound by residues D236, E281, and D308. The (2R)-2-phosphoglycerate site is built by K333, R362, S363, and K384. The active-site Proton acceptor is the K333.

It belongs to the enolase family. The cofactor is Mg(2+).

It localises to the cytoplasm. The protein localises to the secreted. The protein resides in the cell surface. The enzyme catalyses (2R)-2-phosphoglycerate = phosphoenolpyruvate + H2O. It participates in carbohydrate degradation; glycolysis; pyruvate from D-glyceraldehyde 3-phosphate: step 4/5. Its function is as follows. Catalyzes the reversible conversion of 2-phosphoglycerate (2-PG) into phosphoenolpyruvate (PEP). It is essential for the degradation of carbohydrates via glycolysis. The protein is Enolase of Methanothermobacter thermautotrophicus (strain ATCC 29096 / DSM 1053 / JCM 10044 / NBRC 100330 / Delta H) (Methanobacterium thermoautotrophicum).